We begin with the raw amino-acid sequence, 762 residues long: Subtilisin-like protease SBT3.11 (762 aa).

Positions 1–16 are cleaved as a signal peptide; it reads MMSSIVSWWFFWVISA. A propeptide spans 17–116 (activation peptide); it reads VCILKVEFNI…VTPNTFYELQ (100 aa). Positions 37–115 constitute an Inhibitor I9 domain; the sequence is VHIVYLGEKE…QVTPNTFYEL (79 aa). The Peptidase S8 domain maps to 120-609; sequence TFDYLGLSHS…GGLVNPNKAA (490 aa). The active-site Charge relay system is the D150. N-linked (GlcNAc...) asparagine glycosylation occurs at N206. The active-site Charge relay system is the H226. N241 and N371 each carry an N-linked (GlcNAc...) asparagine glycan. The active-site Charge relay system is S540.

Belongs to the peptidase S8 family.

The protein resides in the secreted. This is Subtilisin-like protease SBT3.11 from Arabidopsis thaliana (Mouse-ear cress).